We begin with the raw amino-acid sequence, 111 residues long: Ig kappa chain V-III region PC 3741/TEPC 111 (111 aa).

The interval 1-23 (DIVLTQSPASLAVSLGQRATISC) is framework-1. Residues cysteine 23 and cysteine 92 are joined by a disulfide bond. The interval 24–38 (RASESVDSYGNSFMH) is complementarity-determining-1. The segment at 39 to 53 (WYQQKPGQPPKLLIY) is framework-2. The tract at residues 54-60 (RASNLES) is complementarity-determining-2. The tract at residues 61–92 (GIPARFSGSGSRTDFTLTINPVEADDVATYYC) is framework-3. The segment at 93–101 (QQSNEDPYT) is complementarity-determining-3. Residues 102-111 (FGGGTKLEIK) form a framework-4 region.

In Mus musculus (Mouse), this protein is Ig kappa chain V-III region PC 3741/TEPC 111.